The following is a 261-amino-acid chain: MARGLKKHLKRLNAPKHWMLDKLGGAFAPKPSSGPHKSRECLPLVLIIRNRLKYALTYREVISILMQRHIQVDGKVRTDKTYPAGFMDVVSIPKTNENFRLLYDTKGRFRLHSIKDEEAKFKLCKVRSIQFGQKGIPYLNTYDGRTIRYPDPLIKPNDTIKLDLEENKIVEFIKFDVGNVVMVTGGRNRGRVGVIKNREKHKGSFETIHIQDSTGHEFATRLGNVYTIGKGTKPWVSLPKGKGIKLTIIEEARKRLSAQQA.

The S4 RNA-binding domain maps to 42 to 104 (LPLVLIIRNR…TNENFRLLYD (63 aa)).

The protein belongs to the eukaryotic ribosomal protein eS4 family.

The protein resides in the cytoplasm. The sequence is that of Small ribosomal subunit protein eS4z (RPS4A) from Arabidopsis thaliana (Mouse-ear cress).